Consider the following 789-residue polypeptide: Protein translocase subunit SecA 2 (789 aa).

Residues Q79, 97–101 (GEGKT), and D487 contribute to the ATP site.

This sequence belongs to the SecA family. Monomer and homodimer. Part of the essential Sec protein translocation apparatus which comprises SecA, SecYEG and auxiliary proteins SecDF. Other proteins may also be involved.

It localises to the cell membrane. It is found in the cytoplasm. It catalyses the reaction ATP + H2O + cellular proteinSide 1 = ADP + phosphate + cellular proteinSide 2.. Functionally, part of the Sec protein translocase complex. Interacts with the SecYEG preprotein conducting channel. Has a central role in coupling the hydrolysis of ATP to the transfer of proteins into and across the cell membrane, serving as an ATP-driven molecular motor driving the stepwise translocation of polypeptide chains across the membrane. This Pediococcus pentosaceus (strain ATCC 25745 / CCUG 21536 / LMG 10740 / 183-1w) protein is Protein translocase subunit SecA 2.